The sequence spans 329 residues: Chlorophyllase-1, chloroplastic (329 aa).

The transit peptide at 1-21 directs the protein to the chloroplast; it reads MAAMVDSKPAASVQGTPLLAT. The short motif at 145-149 is the GXSXG element; it reads GHSRG. Ser-147 (nucleophile) is an active-site residue. Active-site charge relay system residues include Asp-169 and His-242.

The protein belongs to the AB hydrolase superfamily. Lipase family.

It is found in the plastid. It localises to the chloroplast. The catalysed reaction is a chlorophyll + H2O = a chlorophyllide + phytol + H(+). It functions in the pathway porphyrin-containing compound metabolism; chlorophyll degradation. Catalyzes the hydrolysis of ester bond in chlorophyll to yield chlorophyllide and phytol. This is Chlorophyllase-1, chloroplastic from Citrus unshiu (Satsuma mandarin).